A 146-amino-acid chain; its full sequence is Large ribosomal subunit protein uL15 (146 aa).

The span at 1 to 13 (MKLNELKPNEGSR) shows a compositional bias: basic and acidic residues. A disordered region spans residues 1 to 54 (MKLNELKPNEGSRRNRKRVGRGTSSGYGKTAGRGQKGQLARTGGKTRLGFEGGQ). Gly residues predominate over residues 23–35 (TSSGYGKTAGRGQ).

This sequence belongs to the universal ribosomal protein uL15 family. As to quaternary structure, part of the 50S ribosomal subunit.

Its function is as follows. Binds to the 23S rRNA. The chain is Large ribosomal subunit protein uL15 from Lactobacillus johnsonii (strain CNCM I-12250 / La1 / NCC 533).